The primary structure comprises 1127 residues: WD repeat and HMG-box DNA-binding protein 1 (1127 aa).

WD repeat units follow at residues 11–50, 52–91, 92–131, 134–173, 184–223, 228–267, and 271–310; these read GHPE…DPKS, SIGE…GILT, RFTT…QQKT, GHSA…CEAV, FNAK…NICT, FITQ…CLER, and EKGY…DVKQ. Disordered regions lie at residues 811 to 1013 and 1064 to 1127; these read AAEQ…AENK and KAKG…FKKE. The span at 819–829 shows a compositional bias: acidic residues; it reads QNEEEDEEEED. Residues 846–857 are compositionally biased toward basic and acidic residues; it reads GDSRAKPVKQDQ. Acidic residues predominate over residues 858–877; sequence YEENNEEEMEEEEKEQEEAL. Polar residues-rich tracts occupy residues 881 to 891 and 918 to 937; these read TPTANPFNKSV and SASQ…TSIL. A compositionally biased stretch (low complexity) spans 948 to 960; it reads SASGSPSTSKSDS. Residues 1013 to 1076 constitute a DNA-binding region (HMG box); the sequence is KKPKTGFQLW…GDYPGEDGAD (64 aa). Residues 1087–1100 show a composition bias toward polar residues; it reads NMASNGCPQENTDS.

As to quaternary structure, homodimer. In terms of tissue distribution, found in oocytes and in various other cells.

It localises to the nucleus. Its subcellular location is the nucleoplasm. It is found in the cytoplasm. In terms of biological role, core replisome component that acts as a replication initiation factor. Binds directly to the CMG complex and functions as a hub to recruit additional proteins to the replication fork. In Xenopus laevis (African clawed frog), this protein is WD repeat and HMG-box DNA-binding protein 1 (wdhd1).